The following is a 525-amino-acid chain: GMP synthase [glutamine-hydrolyzing] (525 aa).

The region spanning lysine 8–asparagine 207 is the Glutamine amidotransferase type-1 domain. Residue cysteine 85 is the Nucleophile of the active site. Catalysis depends on residues histidine 181 and glutamate 183. Residues tryptophan 208–arginine 400 enclose the GMPS ATP-PPase domain. Residue serine 235–serine 241 participates in ATP binding.

In terms of assembly, homodimer.

It carries out the reaction XMP + L-glutamine + ATP + H2O = GMP + L-glutamate + AMP + diphosphate + 2 H(+). Its pathway is purine metabolism; GMP biosynthesis; GMP from XMP (L-Gln route): step 1/1. Its function is as follows. Catalyzes the synthesis of GMP from XMP. This is GMP synthase [glutamine-hydrolyzing] from Shewanella sediminis (strain HAW-EB3).